The sequence spans 219 residues: Large ribosomal subunit protein uL1 (219 aa).

It belongs to the universal ribosomal protein uL1 family. As to quaternary structure, component of the large ribosomal subunit.

The protein resides in the cytoplasm. This chain is Large ribosomal subunit protein uL1 (RPL1), found in Encephalitozoon cuniculi (strain GB-M1) (Microsporidian parasite).